A 76-amino-acid polypeptide reads, in one-letter code: Ovarian cancer-related protein 1 (76 aa).

The polypeptide is Ovarian cancer-related protein 1 (OCR1) (Homo sapiens (Human)).